The primary structure comprises 111 residues: COX assembly mitochondrial protein (111 aa).

The region spanning 39–82 (YKKCANFVQAMADCAKANGMKVFPTCDKQRDEMKSCLLFYQTDE) is the CHCH domain. 2 consecutive short sequence motifs (cx9C motif) follow at residues 42–52 (CANFVQAMADC) and 64–74 (CDKQRDEMKSC). 2 disulfides stabilise this stretch: C42–C74 and C52–C64.

This sequence belongs to the CMC family.

Its subcellular location is the mitochondrion inner membrane. In terms of biological role, required for mitochondrial cytochrome c oxidase (COX) assembly and respiration. Binds copper. May be involved in copper trafficking and distribution to mitochondrial COX and SOD1. In Saccharomyces cerevisiae (strain RM11-1a) (Baker's yeast), this protein is COX assembly mitochondrial protein (CMC1).